We begin with the raw amino-acid sequence, 237 residues long: NAD(P)H-hydrate epimerase (237 aa).

One can recognise a YjeF N-terminal domain in the interval 11–223 (AASLDRDLMN…GLDIPEYPGV (213 aa)). Residue 61–65 (NNGGD) coordinates (6S)-NADPHX. Positions 62 and 123 each coordinate K(+). (6S)-NADPHX is bound by residues 127 to 133 (GFSFSGP) and Asp-156. Ser-159 is a binding site for K(+).

It belongs to the NnrE/AIBP family. K(+) is required as a cofactor.

The protein localises to the cytoplasm. It is found in the mitochondrion. The catalysed reaction is (6R)-NADHX = (6S)-NADHX. It catalyses the reaction (6R)-NADPHX = (6S)-NADPHX. Its function is as follows. Catalyzes the epimerization of the S- and R-forms of NAD(P)HX, a damaged form of NAD(P)H that is a result of enzymatic or heat-dependent hydration. This is a prerequisite for the S-specific NAD(P)H-hydrate dehydratase to allow the repair of both epimers of NAD(P)HX. The protein is NAD(P)H-hydrate epimerase of Ajellomyces capsulatus (strain G186AR / H82 / ATCC MYA-2454 / RMSCC 2432) (Darling's disease fungus).